The following is a 275-amino-acid chain: Aliphatic sulfonates import ATP-binding protein SsuB 1 (275 aa).

Residues 34–260 (ISLTGLEKSF…RHGHPGLCEL (227 aa)) form the ABC transporter domain. Position 66-73 (66-73 (GKSGCGKS)) interacts with ATP.

Belongs to the ABC transporter superfamily. Aliphatic sulfonates importer (TC 3.A.1.17.2) family. As to quaternary structure, the complex is composed of two ATP-binding proteins (SsuB), two transmembrane proteins (SsuC) and a solute-binding protein (SsuA).

It localises to the cell inner membrane. The catalysed reaction is ATP + H2O + aliphatic sulfonate-[sulfonate-binding protein]Side 1 = ADP + phosphate + aliphatic sulfonateSide 2 + [sulfonate-binding protein]Side 1.. In terms of biological role, part of the ABC transporter complex SsuABC involved in aliphatic sulfonates import. Responsible for energy coupling to the transport system. The sequence is that of Aliphatic sulfonates import ATP-binding protein SsuB 1 from Rhizobium johnstonii (strain DSM 114642 / LMG 32736 / 3841) (Rhizobium leguminosarum bv. viciae).